A 561-amino-acid polypeptide reads, in one-letter code: MADHNPDGDPTPRTLLRRVLDTADPRTPRRPRSARAGAQRALLETASSRRLSGQTKTIAKGRSRGARSIGRSAHVQARGHLEEQTPRTLLKNILLTAPESSILMPESVVKPVPAPQVVQPSRRESSRGSLELQLPELEPSTTLAPGLLAPGRRKQRLRLSMFQQGVDQGLPLSQEPQGNADASSLTSSLNLTFATPLQPQSVQRPGLARRPPARRAVDVGAFLRDLRDTSLAPPNIVLEDTQPFSQPTVGSPNVYHSLPCTPHTGAEDAEQAAGRRTQSSGPGLQNNSPGKPAQFLAGEAEEVDAFALGFLSTSSGVSGEDEVEPLHNGVEEAEKKMKEEGVSVSEMEATGAQGPSRAEEPEGHTQVTEAEGSQGTAEAEGPGASSGDEDASSRAASPELASSTPESLQARRHHQFPEPAPPPGAAVLSSEPAEPLLVRCPPRSRTTGPRPRQDPHKAGLSHYVKLFSFFAKMPMERKALEMVEKCLDKYFQHLCDDLEVFAAHAGRKTVKPEDLELLMRRQGLVTDQVSLHVLVERHLPLEYRQLLIPCAYSGNSVFPAQ.

The disordered stretch occupies residues 1–78 (MADHNPDGDP…IGRSAHVQAR (78 aa)). Residues 18 to 27 (RVLDTADPRT) show a composition bias toward basic and acidic residues. The span at 45–57 (TASSRRLSGQTKT) shows a compositional bias: polar residues. A Phosphoserine modification is found at Ser47. Residue Thr85 is modified to Phosphothreonine. Residues 93-421 (ILLTAPESSI…RHHQFPEPAP (329 aa)) form a flexible stalk domain region. Disordered regions lie at residues 114–134 (APQV…ELQL), 256–293 (HSLP…GKPA), and 314–457 (SSGV…DPHK). The segment covering 276 to 289 (RTQSSGPGLQNNSP) has biased composition (polar residues). Positions 329–341 (GVEEAEKKMKEEG) are enriched in basic and acidic residues. 7 positions are modified to phosphoserine: Ser343, Ser345, Ser356, Ser373, Ser385, Ser386, and Ser397. Polar residues predominate over residues 365 to 376 (TQVTEAEGSQGT). Positions 439-450 (RCPPRSRTTGPR) are enriched in low complexity.

Belongs to the CENP-T/CNN1 family. In terms of assembly, component of the CENPA-CAD complex, composed of CENPI, CENPK, CENPL, CENPO, CENPP, CENPQ, CENPR and CENPS. The CENPA-CAD complex is probably recruited on centromeres by the CENPA-NAC complex, at least composed of CENPA, CENPC, CENPH, CENPM, CENPN, CENPT and CENPU. Identified in a centromeric complex containing histones H2A, H2B, H3 and H4, and at least CENPA, CENPB, CENPC, CENPT, CENPN, HJURP, SUPT16H, SSRP1 and RSF1. Interacts (via N-terminus) with the NDC80 complex. Heterodimer with CENPW; this dimer coassembles with CENPS-CENPX heterodimers at centromeres to form the tetrameric CENP-T-W-S-X complex. Dynamically phosphorylated during the cell cycle. Phosphorylated during G2 phase, metaphase and anaphase, but not during telophase or G1 phase.

It is found in the nucleus. The protein localises to the chromosome. Its subcellular location is the centromere. It localises to the kinetochore. Component of the CENPA-NAC (nucleosome-associated) complex, a complex that plays a central role in assembly of kinetochore proteins, mitotic progression and chromosome segregation. The CENPA-NAC complex recruits the CENPA-CAD (nucleosome distal) complex and may be involved in incorporation of newly synthesized CENPA into centromeres. Part of a nucleosome-associated complex that binds specifically to histone H3-containing nucleosomes at the centromere, as opposed to nucleosomes containing CENPA. Component of the heterotetrameric CENP-T-W-S-X complex that binds and supercoils DNA, and plays an important role in kinetochore assembly. CENPT has a fundamental role in kinetochore assembly and function. It is one of the inner kinetochore proteins, with most further proteins binding downstream. Required for normal chromosome organization and normal progress through mitosis. The protein is Centromere protein T (CENPT) of Macaca fascicularis (Crab-eating macaque).